We begin with the raw amino-acid sequence, 123 residues long: Small ribosomal subunit protein uS12c (123 aa).

Belongs to the universal ribosomal protein uS12 family. In terms of assembly, part of the 30S ribosomal subunit.

The protein resides in the plastid. The protein localises to the chloroplast. Functionally, with S4 and S5 plays an important role in translational accuracy. Located at the interface of the 30S and 50S subunits. The protein is Small ribosomal subunit protein uS12c (rps12) of Marchantia polymorpha (Common liverwort).